A 218-amino-acid chain; its full sequence is uncharacterized protein (218 aa).

It belongs to the HAD-like hydrolase superfamily.

Its subcellular location is the cytoplasm. It localises to the nucleus. This is an uncharacterized protein from Saccharomyces cerevisiae (strain ATCC 204508 / S288c) (Baker's yeast).